A 155-amino-acid chain; its full sequence is Protein FAM162B (155 aa).

A helical transmembrane segment spans residues V95 to V114.

This sequence belongs to the UPF0389 family.

Its subcellular location is the membrane. This chain is Protein FAM162B (fam162b), found in Danio rerio (Zebrafish).